Here is a 74-residue protein sequence, read N- to C-terminus: Delta-actitoxin-Amc3a (74 aa).

Residues 1-19 (MNRLIILVVAAVFLGMASA) form the signal peptide. A propeptide spanning residues 20-24 (EEDVL) is cleaved from the precursor. Pro-29 carries the post-translational modification Hydroxyproline. Cystine bridges form between Cys-30-Cys-70, Cys-32-Cys-60, and Cys-53-Cys-71. The residue at position 73 (Gln-73) is a Glutamine amide.

This sequence belongs to the sea anemone sodium channel inhibitory toxin family. Type I subfamily.

The protein resides in the secreted. Its subcellular location is the nematocyst. Functionally, inhibits voltage-gated sodium channels (Nav). This chain is Delta-actitoxin-Amc3a, found in Antheopsis maculata (Sea anemone).